A 405-amino-acid chain; its full sequence is MTKKITVLVCGGGNGAHVTAGLAASRDDIETRVLTTFADEAERWTNIMKENDLRITVDEGDIKSGESVDFKVKLNCITKDPSKAVPGADVIIFTVPAFAHQSYLEAIEPYIQPNTTIVGMPGQPGFEFQVFDVLKDKAKQCVIMSFESLPWACRIAEFGKFVQILMVKVNLMGCLIRGQSKPSYDPMEAVQRVMGKAPILTQANNYIEPILATKSIIHPPIMYGKWKDWDGKPIEEKPLFYQGLDEEQARYLGGISDELVATAKAIAAQKPEVDLSGVLHLYDWYLRDHKPYIKDTTSLLTVLQTDTAYDGLVHPMKETEDGKFVPDFRYRYLTEDVPNGLVVTKGLAQIAGVPTPYHDEVIAWCQKQLGKEIIVGDELKGKDIGSTRCPQRYGINTMDALVNIM.

This sequence belongs to the lysopine/nopaline/octopine/opine/vitopine dehydrogenases family.

In Haliotis discus hannai (Japanese abalone), this protein is Opine dehydrogenase.